The chain runs to 42 residues: MSNTGTTGRIPLWLVGTVVGIAALTLLSVFFYGSYVGLGSSL.

A helical membrane pass occupies residues 10-30; it reads IPLWLVGTVVGIAALTLLSVF.

The protein belongs to the PsbJ family. In terms of assembly, PSII is composed of 1 copy each of membrane proteins PsbA, PsbB, PsbC, PsbD, PsbE, PsbF, PsbH, PsbI, PsbJ, PsbK, PsbL, PsbM, PsbT, PsbX, PsbY, PsbZ, Psb30/Ycf12, at least 3 peripheral proteins of the oxygen-evolving complex and a large number of cofactors. It forms dimeric complexes.

The protein resides in the plastid. It localises to the chloroplast thylakoid membrane. One of the components of the core complex of photosystem II (PSII). PSII is a light-driven water:plastoquinone oxidoreductase that uses light energy to abstract electrons from H(2)O, generating O(2) and a proton gradient subsequently used for ATP formation. It consists of a core antenna complex that captures photons, and an electron transfer chain that converts photonic excitation into a charge separation. This chain is Photosystem II reaction center protein J, found in Tupiella akineta (Green alga).